The following is a 100-amino-acid chain: Large ribosomal subunit protein eL36B (100 aa).

It belongs to the eukaryotic ribosomal protein eL36 family. As to quaternary structure, component of the large ribosomal subunit (LSU). Mature yeast ribosomes consist of a small (40S) and a large (60S) subunit. The 40S small subunit contains 1 molecule of ribosomal RNA (18S rRNA) and 33 different proteins (encoded by 57 genes). The large 60S subunit contains 3 rRNA molecules (25S, 5.8S and 5S rRNA) and 46 different proteins (encoded by 81 genes).

The protein localises to the cytoplasm. In terms of biological role, component of the ribosome, a large ribonucleoprotein complex responsible for the synthesis of proteins in the cell. The small ribosomal subunit (SSU) binds messenger RNAs (mRNAs) and translates the encoded message by selecting cognate aminoacyl-transfer RNA (tRNA) molecules. The large subunit (LSU) contains the ribosomal catalytic site termed the peptidyl transferase center (PTC), which catalyzes the formation of peptide bonds, thereby polymerizing the amino acids delivered by tRNAs into a polypeptide chain. The nascent polypeptides leave the ribosome through a tunnel in the LSU and interact with protein factors that function in enzymatic processing, targeting, and the membrane insertion of nascent chains at the exit of the ribosomal tunnel. In Saccharomyces cerevisiae (strain ATCC 204508 / S288c) (Baker's yeast), this protein is Large ribosomal subunit protein eL36B.